The following is a 132-amino-acid chain: Small ribosomal subunit protein uS11 (132 aa).

A disordered region spans residues 1-21; that stretch reads MAAPKSAVRKPRRKDKKNIAV. Positions 7–16 are enriched in basic residues; the sequence is AVRKPRRKDK.

The protein belongs to the universal ribosomal protein uS11 family. Part of the 30S ribosomal subunit. Interacts with proteins S7 and S18. Binds to IF-3.

Its function is as follows. Located on the platform of the 30S subunit, it bridges several disparate RNA helices of the 16S rRNA. Forms part of the Shine-Dalgarno cleft in the 70S ribosome. This chain is Small ribosomal subunit protein uS11, found in Clavibacter sepedonicus (Clavibacter michiganensis subsp. sepedonicus).